We begin with the raw amino-acid sequence, 455 residues long: MTDGRQQHTRRAPTTDIYDATELTRAFEQLMRTKRFNSLQEQSRSRSRTQSPSHAQPYHTPPHPSRAPPPPPTGAHYPSSQSPSQQHQQHQLPASSSLRNLPVFPSPPRDQQSLKFRNLLHVLSVTPTKYENPGLLDEALSLIPLDRLYSEAEEESQIMQAQAASVGGKPEWGYQDCVIRALLRWFKNSFFQFVNNPPCSRCLMPTIAQGMTPPTPDETARGATRVELYRCSESTCGSYERFPRYSDVWQLLQSRRGRVGEWANCFSMFCRALGGRVRWVWNSEDYVWTEVYSEHQRRWVHVDACEGAWDQPRLYTEGWGRKLSYCIAFSIDGATDVTRRYVRSPVKHGAPRNRVPEEVLVWIIHEIRKKRRESMSKTDQRRLMKEDEREEKELRAYMASALAAEINNLIPREQTSGRPGEQKTPASMQDTPVDWVAAQQMGPGQSGPDRSQDGR.

The tract at residues 1–110 (MTDGRQQHTR…LPVFPSPPRD (110 aa)) is disordered. Positions 38–53 (SLQEQSRSRSRTQSPS) are enriched in low complexity. Residues 59 to 73 (HTPPHPSRAPPPPPT) are compositionally biased toward pro residues. The segment covering 74 to 98 (GAHYPSSQSPSQQHQQHQLPASSSL) has biased composition (low complexity). Zn(2+) is bound by residues C199, C202, C231, and C236. The interval 408–455 (NLIPREQTSGRPGEQKTPASMQDTPVDWVAAQQMGPGQSGPDRSQDGR) is disordered.

It belongs to the transglutaminase-like superfamily. PNGase family.

The sequence is that of Protein png1 (png1) from Aspergillus fumigatus (strain ATCC MYA-4609 / CBS 101355 / FGSC A1100 / Af293) (Neosartorya fumigata).